The primary structure comprises 659 residues: Putative cysteine-rich receptor-like protein kinase 39 (659 aa).

Positions 1 to 27 are cleaved as a signal peptide; sequence MGKYSVLMIFIASSLLIVLQNVEIVNA. Gnk2-homologous domains are found at residues 28–134 and 142–253; these read VGCT…NHST and PSVR…LYAF. Residues 28–289 lie on the Extracellular side of the membrane; sequence VGCTGSFFNG…KKKGRSIGYG (262 aa). Residues Asn-38, Asn-64, Asn-122, Asn-131, Asn-157, Asn-170, Asn-259, and Asn-274 are each glycosylated (N-linked (GlcNAc...) asparagine). Residues 290-310 form a helical membrane-spanning segment; the sequence is GIIAIVVVLTFINILVFIGYI. Residues 311–659 are Cytoplasmic-facing; it reads KVYGRRKESY…DDVFTELSCR (349 aa). A Protein kinase domain is found at 353-619; it reads FSSENTLGQG…PTMSSVIIWL (267 aa). ATP-binding positions include 359-367 and Lys-381; that span reads LGQGGFGTV. The residue at position 426 (Tyr-426) is a Phosphotyrosine. Asp-478 acts as the Proton acceptor in catalysis. A Phosphoserine modification is found at Ser-482. At Thr-518 the chain carries Phosphothreonine. Tyr-526 carries the phosphotyrosine modification.

This sequence belongs to the protein kinase superfamily. Ser/Thr protein kinase family. CRK subfamily.

It localises to the membrane. The catalysed reaction is L-seryl-[protein] + ATP = O-phospho-L-seryl-[protein] + ADP + H(+). It catalyses the reaction L-threonyl-[protein] + ATP = O-phospho-L-threonyl-[protein] + ADP + H(+). The protein is Putative cysteine-rich receptor-like protein kinase 39 (CRK39) of Arabidopsis thaliana (Mouse-ear cress).